The following is a 119-amino-acid chain: Toxin ICK-9 (119 aa).

Positions 1-19 (MMKLYSLVIIATLAAAAFA) are cleaved as a signal peptide. Disulfide bonds link cysteine 59-cysteine 74, cysteine 67-cysteine 80, cysteine 71-cysteine 116, and cysteine 73-cysteine 87.

This sequence belongs to the neurotoxin 25 family. ICK-8 subfamily. As to expression, expressed by the venom gland.

It is found in the secreted. Ion channel inhibitor. The chain is Toxin ICK-9 from Trittame loki (Brush-footed trapdoor spider).